Reading from the N-terminus, the 235-residue chain is Small ribosomal subunit protein uS3 (235 aa).

In terms of domain architecture, KH type-2 spans 39–107; that stretch reads VRSYVKKKLI…PAQVNISEIR (69 aa).

This sequence belongs to the universal ribosomal protein uS3 family. As to quaternary structure, part of the 30S ribosomal subunit. Forms a tight complex with proteins S10 and S14.

Binds the lower part of the 30S subunit head. Binds mRNA in the 70S ribosome, positioning it for translation. The polypeptide is Small ribosomal subunit protein uS3 (Buchnera aphidicola subsp. Cinara cedri (strain Cc)).